A 140-amino-acid polypeptide reads, in one-letter code: Lipoprotein MlpD (140 aa).

The signal sequence occupies residues 1-17 (MKIINILFCLFLLMLNG). Residue Cys-18 is the site of N-palmitoyl cysteine attachment. The S-diacylglycerol cysteine moiety is linked to residue Cys-18. Residues 22 to 53 (DTNNSQTKSRQKRDLTQKEATQEKPKSKEELL) are disordered. Over residues 33 to 53 (KRDLTQKEATQEKPKSKEELL) the composition is skewed to basic and acidic residues.

Belongs to the Multicopy lipoprotein (Mlp) family.

The protein resides in the cell outer membrane. An outer membrane protein that may participate in pathogenesis. Some human Lyme disease patients have antibodies against this protein. The Mlp proteins probably undergo intragenic recombination, generating new alleles. This chain is Lipoprotein MlpD, found in Borreliella burgdorferi (strain ATCC 35210 / DSM 4680 / CIP 102532 / B31) (Borrelia burgdorferi).